A 566-amino-acid chain; its full sequence is Endoglucanase G (566 aa).

An N-terminal signal peptide occupies residues 1-30; it reads MKKAKAIFSLVVALMVLAIFCFAQNTGSTA. Catalysis depends on E226, which acts as the Proton donor. The Nucleophile role is filled by E381. The tract at residues 473–494 is disordered; sequence GTPQASDPPATPTATPTKPAAS. The segment covering 474-494 has biased composition (low complexity); the sequence is TPQASDPPATPTATPTKPAAS. The Dockerin domain maps to 497-564; it reads PSFIYGDINS…LLRSIDKLPH (68 aa).

It belongs to the glycosyl hydrolase 5 (cellulase A) family.

The enzyme catalyses Endohydrolysis of (1-&gt;4)-beta-D-glucosidic linkages in cellulose, lichenin and cereal beta-D-glucans.. Functionally, this enzyme catalyzes the endohydrolysis of 1,4-beta-glucosidic linkages in cellulose, lichenin and cereal beta-D-glucans. This is Endoglucanase G (celG) from Acetivibrio thermocellus (strain ATCC 27405 / DSM 1237 / JCM 9322 / NBRC 103400 / NCIMB 10682 / NRRL B-4536 / VPI 7372) (Clostridium thermocellum).